Reading from the N-terminus, the 336-residue chain is 3-isopropylmalate dehydrogenase (336 aa).

Substrate contacts are provided by Arg87, Arg97, Arg121, and Asp211. Mg(2+) is bound by residues Asp211, Asp235, and Asp239. 271-283 (GSAPDIAGQGIAD) is an NAD(+) binding site.

This sequence belongs to the isocitrate and isopropylmalate dehydrogenases family. LeuB type 2 subfamily. In terms of assembly, homodimer. Requires Mg(2+) as cofactor. It depends on Mn(2+) as a cofactor.

Its subcellular location is the cytoplasm. It carries out the reaction (2R,3S)-3-isopropylmalate + NAD(+) = 4-methyl-2-oxopentanoate + CO2 + NADH. It participates in amino-acid biosynthesis; L-leucine biosynthesis; L-leucine from 3-methyl-2-oxobutanoate: step 3/4. Catalyzes the oxidation of 3-carboxy-2-hydroxy-4-methylpentanoate (3-isopropylmalate) to 3-carboxy-4-methyl-2-oxopentanoate. The product decarboxylates to 4-methyl-2 oxopentanoate. This is 3-isopropylmalate dehydrogenase (leuB) from Mycobacterium tuberculosis (strain CDC 1551 / Oshkosh).